The chain runs to 157 residues: Deoxyuridine 5'-triphosphate nucleotidohydrolase (157 aa).

Substrate is bound by residues 76 to 78 (RSG), asparagine 89, 93 to 95 (TID), and lysine 103.

Belongs to the dUTPase family. It depends on Mg(2+) as a cofactor.

The enzyme catalyses dUTP + H2O = dUMP + diphosphate + H(+). It participates in pyrimidine metabolism; dUMP biosynthesis; dUMP from dCTP (dUTP route): step 2/2. In terms of biological role, this enzyme is involved in nucleotide metabolism: it produces dUMP, the immediate precursor of thymidine nucleotides and it decreases the intracellular concentration of dUTP so that uracil cannot be incorporated into DNA. This is Deoxyuridine 5'-triphosphate nucleotidohydrolase from Brucella abortus (strain 2308).